Consider the following 250-residue polypeptide: MRVDLNCDLGEAFGNYSFGGDHQIIPLITSANVACGFHAGDENVMNETVKLAKAHNVAVGAHPGLPDLKGFGRRNIDISNDEIYNLMIYQLGALQGFCRIHQLKINHVKPHGALYQMGAKDREIANVIAQAVYDFDPSLVLVGLANSYLISEAKNVGLITASEVFADRRYEDDGQLVSRKESDAVITDTDEALKQVLKMVKENKVISKNNKEVTLQADTICVHGDGEHALLFVSKIREILMKEGIDIQSL.

The protein belongs to the LamB/PxpA family. In terms of assembly, forms a complex composed of PxpA, PxpB and PxpC.

The enzyme catalyses 5-oxo-L-proline + ATP + 2 H2O = L-glutamate + ADP + phosphate + H(+). Its function is as follows. Catalyzes the cleavage of 5-oxoproline to form L-glutamate coupled to the hydrolysis of ATP to ADP and inorganic phosphate. In Staphylococcus aureus (strain Mu3 / ATCC 700698), this protein is 5-oxoprolinase subunit A.